A 500-amino-acid chain; its full sequence is Aspartyl/glutamyl-tRNA(Asn/Gln) amidotransferase subunit B (500 aa).

Belongs to the GatB/GatE family. GatB subfamily. As to quaternary structure, heterotrimer of A, B and C subunits.

It catalyses the reaction L-glutamyl-tRNA(Gln) + L-glutamine + ATP + H2O = L-glutaminyl-tRNA(Gln) + L-glutamate + ADP + phosphate + H(+). The enzyme catalyses L-aspartyl-tRNA(Asn) + L-glutamine + ATP + H2O = L-asparaginyl-tRNA(Asn) + L-glutamate + ADP + phosphate + 2 H(+). Its function is as follows. Allows the formation of correctly charged Asn-tRNA(Asn) or Gln-tRNA(Gln) through the transamidation of misacylated Asp-tRNA(Asn) or Glu-tRNA(Gln) in organisms which lack either or both of asparaginyl-tRNA or glutaminyl-tRNA synthetases. The reaction takes place in the presence of glutamine and ATP through an activated phospho-Asp-tRNA(Asn) or phospho-Glu-tRNA(Gln). This Clavibacter sepedonicus (Clavibacter michiganensis subsp. sepedonicus) protein is Aspartyl/glutamyl-tRNA(Asn/Gln) amidotransferase subunit B.